The following is a 508-amino-acid chain: Photosystem II CP47 reaction center protein (508 aa).

Transmembrane regions (helical) follow at residues 21-36 (AVHI…WAGS), 101-115 (IVFS…IWHW), 140-156 (GIHL…FGAF), 203-218 (IAAG…FHLS), 237-252 (VLSS…AFVV), and 457-472 (SFAL…HGAR).

The protein belongs to the PsbB/PsbC family. PsbB subfamily. PSII is composed of 1 copy each of membrane proteins PsbA, PsbB, PsbC, PsbD, PsbE, PsbF, PsbH, PsbI, PsbJ, PsbK, PsbL, PsbM, PsbT, PsbX, PsbY, PsbZ, Psb30/Ycf12, at least 3 peripheral proteins of the oxygen-evolving complex and a large number of cofactors. It forms dimeric complexes. Interacts with PAM68. Interacts with HHL1. The cofactor is Binds multiple chlorophylls. PSII binds additional chlorophylls, carotenoids and specific lipids..

Its subcellular location is the plastid. The protein localises to the chloroplast thylakoid membrane. One of the components of the core complex of photosystem II (PSII). It binds chlorophyll and helps catalyze the primary light-induced photochemical processes of PSII. PSII is a light-driven water:plastoquinone oxidoreductase, using light energy to abstract electrons from H(2)O, generating O(2) and a proton gradient subsequently used for ATP formation. In Arabidopsis thaliana (Mouse-ear cress), this protein is Photosystem II CP47 reaction center protein.